The chain runs to 273 residues: 2,3,4,5-tetrahydropyridine-2,6-dicarboxylate N-succinyltransferase (273 aa).

Substrate is bound by residues arginine 104 and aspartate 141.

The protein belongs to the transferase hexapeptide repeat family. Homotrimer.

The protein localises to the cytoplasm. The catalysed reaction is (S)-2,3,4,5-tetrahydrodipicolinate + succinyl-CoA + H2O = (S)-2-succinylamino-6-oxoheptanedioate + CoA. It functions in the pathway amino-acid biosynthesis; L-lysine biosynthesis via DAP pathway; LL-2,6-diaminopimelate from (S)-tetrahydrodipicolinate (succinylase route): step 1/3. In Laribacter hongkongensis (strain HLHK9), this protein is 2,3,4,5-tetrahydropyridine-2,6-dicarboxylate N-succinyltransferase.